The primary structure comprises 122 residues: UPF0231 protein VSAL_I2591 (122 aa).

The protein belongs to the UPF0231 family.

This chain is UPF0231 protein VSAL_I2591, found in Aliivibrio salmonicida (strain LFI1238) (Vibrio salmonicida (strain LFI1238)).